A 124-amino-acid polypeptide reads, in one-letter code: MPTIQQLIRSERYKLKKKTKSPALKQCPQRRGVCTRVYTTTPKKPNSALRKVARVRLTSGFEVTAYIPGIGHNLQEHSVVLIRGGRVKDLPGVRYHIVRGTLDATGVKDRKQGRSKYGAKRPKE.

Aspartate 89 is subject to 3-methylthioaspartic acid. A disordered region spans residues 104–124; the sequence is ATGVKDRKQGRSKYGAKRPKE. Positions 113 to 124 are enriched in basic residues; it reads GRSKYGAKRPKE.

Belongs to the universal ribosomal protein uS12 family. In terms of assembly, part of the 30S ribosomal subunit. Contacts proteins S8 and S17. May interact with IF1 in the 30S initiation complex.

Its function is as follows. With S4 and S5 plays an important role in translational accuracy. Functionally, interacts with and stabilizes bases of the 16S rRNA that are involved in tRNA selection in the A site and with the mRNA backbone. Located at the interface of the 30S and 50S subunits, it traverses the body of the 30S subunit contacting proteins on the other side and probably holding the rRNA structure together. The combined cluster of proteins S8, S12 and S17 appears to hold together the shoulder and platform of the 30S subunit. This is Small ribosomal subunit protein uS12 from Picosynechococcus sp. (strain ATCC 27264 / PCC 7002 / PR-6) (Agmenellum quadruplicatum).